The primary structure comprises 474 residues: Probable periplasmic serine endoprotease DegP-like (474 aa).

Residues 1 to 25 form the signal peptide; it reads MRNLKSVTPLLMAALLWGQSLLAQA. Catalysis depends on charge relay system residues His113, Asp143, and Ser216. Residues 214-216 and 271-275 each bind substrate; these read GNS and LGVVI. PDZ domains follow at residues 260-351 and 357-463; these read LKAD…VRDG and KVTI…LRQG.

Belongs to the peptidase S1C family.

It localises to the periplasm. The enzyme catalyses Acts on substrates that are at least partially unfolded. The cleavage site P1 residue is normally between a pair of hydrophobic residues, such as Val-|-Val.. Its function is as follows. Might be efficient in the degradation of transiently denatured and unfolded proteins which accumulate in the periplasm following stress conditions. This Ectopseudomonas mendocina (strain ymp) (Pseudomonas mendocina) protein is Probable periplasmic serine endoprotease DegP-like.